Consider the following 185-residue polypeptide: Capsid protein (185 aa).

The disordered stretch occupies residues 135-185 (PNAPILSTLPETTVVRRRDRGRSPRRRTPSPRRRRSQSPRRRRSQSRESQC). The span at 149–178 (VRRRDRGRSPRRRTPSPRRRRSQSPRRRRS) shows a compositional bias: basic residues. Phosphoserine; by host is present on residues Ser-157, Ser-164, and Ser-172. A 1; half-length repeat occupies 157 to 163 (SPRRRTP). Residues 157–179 (SPRRRTPSPRRRRSQSPRRRRSQ) form a 3 X 8 AA repeats of S-P-R-R-R-[PR]-S-Q region. A Bipartite nuclear localization signal motif is present at residues 160 to 177 (RRTPSPRRRRSQSPRRRR). A run of 2 repeats spans residues 164 to 171 (SPRRRRSQ) and 172 to 179 (SPRRRRSQ). An RNA binding region spans residues 179–185 (QSRESQC).

This sequence belongs to the orthohepadnavirus core antigen family. Homodimerizes, then multimerizes. Interacts with cytosol exposed regions of viral L glycoprotein present in the reticulum-to-Golgi compartment. Interacts with human FLNB. Phosphorylated form interacts with host importin alpha; this interaction depends on the exposure of the NLS, which itself depends upon genome maturation and/or phosphorylation of the capsid protein. Interacts with host NUP153. Phosphorylated by host SRPK1, SRPK2, and maybe protein kinase C or GAPDH. Phosphorylation is critical for pregenomic RNA packaging. Protein kinase C phosphorylation is stimulated by HBx protein and may play a role in transport of the viral genome to the nucleus at the late step during the viral replication cycle.

It localises to the virion. The protein localises to the host cytoplasm. Functionally, self assembles to form an icosahedral capsid. Most capsids appear to be large particles with an icosahedral symmetry of T=4 and consist of 240 copies of capsid protein, though a fraction forms smaller T=3 particles consisting of 180 capsid proteins. Entering capsids are transported along microtubules to the nucleus. Phosphorylation of the capsid is thought to induce exposure of nuclear localization signal in the C-terminal portion of the capsid protein that allows binding to the nuclear pore complex via the importin (karyopherin-) alpha and beta. Capsids are imported in intact form through the nuclear pore into the nuclear basket, where it probably binds NUP153. Only capsids that contain the mature viral genome can release the viral DNA and capsid protein into the nucleoplasm. Immature capsids get stuck in the basket. Capsids encapsulate the pre-genomic RNA and the P protein. Pre-genomic RNA is reverse-transcribed into DNA while the capsid is still in the cytoplasm. The capsid can then either be directed to the nucleus, providing more genomes for transcription, or bud through the endoplasmic reticulum to provide new virions. This is Capsid protein from Hepatitis B virus genotype A3 (isolate Cameroon/CMR711/1994) (HBV-A).